We begin with the raw amino-acid sequence, 601 residues long: Vesicular glutamate transporter 3 (601 aa).

Over 1–89 the chain is Cytoplasmic; the sequence is MPFKAFDTFK…CSCCGIPKRY (89 aa). The chain crosses the membrane as a helical span at residues 90–110; the sequence is IIAVMSGLGFCISFGIRCNLG. Over 111-143 the chain is Vesicular; that stretch reads VAIVEMVNNSTVYVDGKPEIQTAQFNWDPETVG. Asparagine 119 carries an N-linked (GlcNAc...) asparagine glycan. The chain crosses the membrane as a helical span at residues 144–164; it reads LIHGSFFWGYIVTQIPGGFIS. The Cytoplasmic portion of the chain corresponds to 165-166; the sequence is NK. The chain crosses the membrane as a helical span at residues 167 to 187; sequence FAASRVFGAAIFLTSTLNMFI. Topologically, residues 188 to 195 are vesicular; sequence PSAARVHY. A helical membrane pass occupies residues 196 to 216; sequence GCVMGVRILQGLVEGVTYPAC. Residues 217-234 lie on the Cytoplasmic side of the membrane; the sequence is HGMWSKWAPPLERSRLAT. A helical transmembrane segment spans residues 235–255; the sequence is TSFCGSYAGAVVAMPLAGVLV. The Vesicular portion of the chain corresponds to 256-262; it reads QYIGWAS. The helical transmembrane segment at 263-283 threads the bilayer; that stretch reads VFYIYGMFGIIWYMFWLLQAY. At 284–327 the chain is on the cytoplasmic side; the sequence is ECPAAHPTISNAERTYIETSIGEGANLASLSKFNTPWRRFFTSL. A helical membrane pass occupies residues 328 to 348; the sequence is PVYAIIVANFCRSWTFYLLLI. At 349 to 366 the chain is on the vesicular side; that stretch reads SQPAYFEEVFGFAISKVG. The chain crosses the membrane as a helical span at residues 367 to 387; it reads LLSAVPHMVMTIVVPIGGQLA. Residues 388–403 lie on the Cytoplasmic side of the membrane; it reads DYLRSRKILTTTAVRK. A helical membrane pass occupies residues 404-424; sequence IMNCGGFGMEATLLLVVGFSH. Residues 425–426 are Vesicular-facing; the sequence is TK. The helical transmembrane segment at 427-447 threads the bilayer; it reads GVAISFLVLAVGFSGFAISGF. The Cytoplasmic portion of the chain corresponds to 448-460; sequence NVNHLDIAPRYAS. A helical membrane pass occupies residues 461-481; the sequence is ILMGISNGVGTLSGMVCPLIV. The Vesicular segment spans residues 482 to 494; it reads GAMTKHKTREEWQ. A helical transmembrane segment spans residues 495–515; it reads NVFLIAALVHYSGVIFYGVFA. The Cytoplasmic portion of the chain corresponds to 516-598; sequence SGEKQDWADP…LSYQAEGDFS (83 aa). The interval 576–601 is disordered; it reads RQQRESAFDGEEPLSYQAEGDFSETS.

This sequence belongs to the major facilitator superfamily. Sodium/anion cotransporter family. VGLUT subfamily. As to expression, expressed in restricted areas of the brain. Highest expression is found in the neurons of the basal forebrain, the hippocampal formation, and the majority of the neurons of the mesencephalic raphe nuclei. Expressed in inner hair cells of the ear.

Its subcellular location is the cytoplasmic vesicle. The protein localises to the secretory vesicle. It localises to the synaptic vesicle membrane. The protein resides in the cell membrane. It is found in the synapse. Its subcellular location is the synaptosome. The enzyme catalyses L-glutamate(out) = L-glutamate(in). It carries out the reaction 3 Na(+)(out) + phosphate(out) = 3 Na(+)(in) + phosphate(in). It catalyses the reaction chloride(in) = chloride(out). With respect to regulation, the L-glutamate uniporter activity exhibits a biphasic dependence on chloride concentration. Chloride channel activity is allosterically activated by lumenal H(+) and Cl(-) leading to synaptic vesicles acidification. The L-glutamate transport activity is allosterically activated by lumenal H(+) and Cl(-), preventing non-vesicular L-glutamate release. Its function is as follows. Multifunctional transporter that transports L-glutamate as well as multiple ions such as chloride, sodium and phosphate. At the synaptic vesicle membrane, mainly functions as an uniporter that mediates the uptake of L-glutamate into synaptic vesicles at presynaptic nerve terminals of excitatory neural cells. The L-glutamate uniporter activity is electrogenic and is driven by the proton electrochemical gradient, mainly by the electrical gradient established by the vacuolar H(+)-ATPase across the synaptic vesicle membrane. In addition, functions as a chloride channel that allows a chloride permeation through the synaptic vesicle membrane that affects the proton electrochemical gradient and promotes synaptic vesicles acidification. At the plasma membrane, following exocytosis, functions as a symporter of Na(+) and phosphate from the extracellular space to the cytoplasm allowing synaptic phosphate homeostasis regulation. The symporter activity is electrogenic. Moreover, operates synergistically with SLC18A3/VACHT under a constant H(+) gradient, thereby allowing striatal vesicular acetylcholine uptake. The chain is Vesicular glutamate transporter 3 from Mus musculus (Mouse).